Here is a 485-residue protein sequence, read N- to C-terminus: Ribulose bisphosphate carboxylase large chain (485 aa).

Substrate contacts are provided by N124 and T174. K176 functions as the Proton acceptor in the catalytic mechanism. K178 contributes to the substrate binding site. The Mg(2+) site is built by K202, D204, and E205. K202 carries the N6-carboxylysine modification. Catalysis depends on H294, which acts as the Proton acceptor. Substrate contacts are provided by R295, H327, and S379.

The protein belongs to the RuBisCO large chain family. Type I subfamily. In terms of assembly, heterohexadecamer of 8 large chains and 8 small chains. Mg(2+) serves as cofactor.

It carries out the reaction 2 (2R)-3-phosphoglycerate + 2 H(+) = D-ribulose 1,5-bisphosphate + CO2 + H2O. The enzyme catalyses D-ribulose 1,5-bisphosphate + O2 = 2-phosphoglycolate + (2R)-3-phosphoglycerate + 2 H(+). Functionally, ruBisCO catalyzes two reactions: the carboxylation of D-ribulose 1,5-bisphosphate, the primary event in carbon dioxide fixation, as well as the oxidative fragmentation of the pentose substrate. Both reactions occur simultaneously and in competition at the same active site. This is Ribulose bisphosphate carboxylase large chain from Rhodopseudomonas palustris (strain ATCC BAA-98 / CGA009).